The sequence spans 615 residues: UvrABC system protein C (615 aa).

The GIY-YIG domain maps to 14–91 (TSPGCYIHKD…IKENKPKYNI (78 aa)). Positions 196–231 (NKIIDELKGKMAAAAQTMEFERAAEYRDLIQAIGTL) constitute a UVR domain.

Belongs to the UvrC family. Interacts with UvrB in an incision complex.

Its subcellular location is the cytoplasm. In terms of biological role, the UvrABC repair system catalyzes the recognition and processing of DNA lesions. UvrC both incises the 5' and 3' sides of the lesion. The N-terminal half is responsible for the 3' incision and the C-terminal half is responsible for the 5' incision. In Streptococcus pneumoniae serotype 19F (strain G54), this protein is UvrABC system protein C.